Consider the following 189-residue polypeptide: Probable nicotinate-nucleotide adenylyltransferase (189 aa).

This sequence belongs to the NadD family.

The enzyme catalyses nicotinate beta-D-ribonucleotide + ATP + H(+) = deamido-NAD(+) + diphosphate. It functions in the pathway cofactor biosynthesis; NAD(+) biosynthesis; deamido-NAD(+) from nicotinate D-ribonucleotide: step 1/1. Functionally, catalyzes the reversible adenylation of nicotinate mononucleotide (NaMN) to nicotinic acid adenine dinucleotide (NaAD). The chain is Probable nicotinate-nucleotide adenylyltransferase from Bacillus cereus (strain G9842).